A 255-amino-acid polypeptide reads, in one-letter code: MLLGVITLFPDMFQSIVRYGIVGRAIRRGILSIKLWNPRLFTYDRHHSVDARPYGGGPGMLMMIEPLRNAINQAKDELGNNIKVIYLSPQGRKLKQKYVYKLAYDHQKLILVCGRYQGIDERLIQTEIDEEWSIGDYILSGGELAAMVLIDTISRVLPGVLGNQDSKESDSFSKERLDCPHYTRPETFDGMKVPSVLLSGNHDEIHRWKQKQALGRTWIKRPDLLNYIQLTNEEKNLLSEFKNEYLLSLNKKTRK.

Residues Gly114 and 134–139 each bind S-adenosyl-L-methionine; that span reads IGDYIL.

It belongs to the RNA methyltransferase TrmD family. As to quaternary structure, homodimer.

The protein resides in the cytoplasm. It carries out the reaction guanosine(37) in tRNA + S-adenosyl-L-methionine = N(1)-methylguanosine(37) in tRNA + S-adenosyl-L-homocysteine + H(+). In terms of biological role, specifically methylates guanosine-37 in various tRNAs. The chain is tRNA (guanine-N(1)-)-methyltransferase from Blochmanniella pennsylvanica (strain BPEN).